We begin with the raw amino-acid sequence, 264 residues long: Phosphonoacetaldehyde hydrolase (264 aa).

Catalysis depends on D9, which acts as the Nucleophile. Mg(2+) contacts are provided by D9 and A11. The active-site Schiff-base intermediate with substrate is the K50. Residue D183 participates in Mg(2+) binding.

The protein belongs to the HAD-like hydrolase superfamily. PhnX family. In terms of assembly, homodimer. Requires Mg(2+) as cofactor.

It catalyses the reaction phosphonoacetaldehyde + H2O = acetaldehyde + phosphate + H(+). Functionally, involved in phosphonate degradation. This chain is Phosphonoacetaldehyde hydrolase, found in Bacillus cereus (strain ZK / E33L).